A 249-amino-acid chain; its full sequence is 2-C-methyl-D-erythritol 4-phosphate cytidylyltransferase (249 aa).

It belongs to the IspD/TarI cytidylyltransferase family. IspD subfamily.

The enzyme catalyses 2-C-methyl-D-erythritol 4-phosphate + CTP + H(+) = 4-CDP-2-C-methyl-D-erythritol + diphosphate. The protein operates within isoprenoid biosynthesis; isopentenyl diphosphate biosynthesis via DXP pathway; isopentenyl diphosphate from 1-deoxy-D-xylulose 5-phosphate: step 2/6. Catalyzes the formation of 4-diphosphocytidyl-2-C-methyl-D-erythritol from CTP and 2-C-methyl-D-erythritol 4-phosphate (MEP). The protein is 2-C-methyl-D-erythritol 4-phosphate cytidylyltransferase of Shewanella oneidensis (strain ATCC 700550 / JCM 31522 / CIP 106686 / LMG 19005 / NCIMB 14063 / MR-1).